The following is a 978-amino-acid chain: MRGARGAWDFLFVLLLLLLVQTGSSQPSVSPGELSLPSIHPAKSELIVSVGDEIRLLCTDPGFVKWTFEILGQLSEKTNPEWITEKAEATNTGNYTCTNKGGLSSSIYVFVRDPEKLFLIDLPLYGKEENDTLVRCPLTDPEVTNYSLTGCEGKPLPKDLTFVADPKAGITIRNVKREYHRLCLHCSANQKGKSMLSKKFTLKVRAAIKAVPVVSVSKTSYLLREGEEFAVTCLIKDVSSSVDSMWIKENSQQSKAQTKKNSWHQGDFSYLRQERLTISSARVNDSGVFMCYANNTFGSANVTTTLEVVDKGFINIFPMMNTTVFVNDGENVDLVVEYEAYPKPEHRQWIYMNRTSTDKWDDYPKSENESNIRYVNELHLTRLKGTEGGTYTFHVSNSDVNSSVTFNVNVNTKPEILTHDRLVNGMLQCVAAGFPEPTIDWYFCPGTEQRCSVPVGPVDVQIQNSSVSPFGKLVVYSTIDDSTFKHNGTVECRAYNDVGKSSASFNFAFKGNNKEQIHAHTLFTPLLIGFVIAAGLMCIFVMILTYKYLQKPMYEVQWKVVEEINGNNYVYIDPTQLPYDHKWEFPRNRLSFGKTLGAGAFGKVVEATAYGLIKSDAAMTVAVKMLKPSAHLTEREALMSELKVLSYLGNHMNIVNLLGACTIGGPTLVITEYCCYGDLLNFLRRKRDSFICSKQEDHAEVALYKNLLHSKESSCNDSTNEYMDMKPGVSYVVPTKAADKRRSARIGSYIERDVTPAIMEDDELALDLEDLLSFSYQVAKGMAFLASKNCIHRDLAARNILLTHGRITKICDFGLARDIKNDSNYVVKGNARLPVKWMAPESIFNCVYTFESDVWSYGIFLWELFSLGSSPYPGMPVDSKFYKMIKEGFRMLSPEHAPAEMYDIMKTCWDADPLKRPTFKQIVQLIEKQISESTNHIYSNLANCSPHRENPAVDHSVRINSVGSSASSTQPLLVHEDV.

A signal peptide spans 1–25; sequence MRGARGAWDFLFVLLLLLLVQTGSS. Residues 26–525 lie on the Extracellular side of the membrane; sequence QPSVSPGELS…QIHAHTLFTP (500 aa). Ig-like C2-type domains follow at residues 27-112, 121-205, 212-309, 318-411, and 414-508; these read PSVS…VFVR, DLPL…LKVR, PVVS…LEVV, PMMN…VNVN, and PEIL…FNFA. A disulfide bond links Cys58 and Cys97. Residues Asn94, Asn130, and Asn145 are each glycosylated (N-linked (GlcNAc...) asparagine). 3 disulfide bridges follow: Cys136–Cys186, Cys151–Cys183, and Cys233–Cys291. Asn284, Asn294, Asn301, Asn321, Asn353, Asn368, Asn401, Asn464, and Asn487 each carry an N-linked (GlcNAc...) asparagine glycan. Cys429 and Cys492 are disulfide-bonded. Residues 526 to 546 form a helical membrane-spanning segment; the sequence is LLIGFVIAAGLMCIFVMILTY. Over 547–978 the chain is Cytoplasmic; it reads KYLQKPMYEV…TQPLLVHEDV (432 aa). Tyr548 and Tyr554 each carry phosphotyrosine. Tyr569 is a Mg(2+) binding site. Phosphotyrosine; by autocatalysis is present on residues Tyr569 and Tyr571. The tract at residues 569 to 571 is important for interaction with phosphotyrosine-binding proteins; sequence YVY. Positions 590–939 constitute a Protein kinase domain; sequence LSFGKTLGAG…ISESTNHIYS (350 aa). Residues 597 to 604, Lys624, and 672 to 678 each bind ATP; these read GAGAFGKV and EYCCYGD. Residues Tyr704 and Tyr722 each carry the phosphotyrosine; by autocatalysis modification. Position 731 is a phosphotyrosine (Tyr731). Ser743 and Ser748 each carry phosphoserine; by PKC/PRKCA. The active-site Proton acceptor is Asp794. Arg798 lines the ATP pocket. Asn799 and Asp812 together coordinate Mg(2+). Residue Ser823 is modified to Phosphoserine. Tyr825 is modified (phosphotyrosine; by autocatalysis). Residue Ser893 is modified to Phosphoserine. Tyr902 carries the post-translational modification Phosphotyrosine. A Phosphotyrosine; by autocatalysis modification is found at Tyr938. Ser961 is modified (phosphoserine).

It belongs to the protein kinase superfamily. Tyr protein kinase family. CSF-1/PDGF receptor subfamily. Monomer in the absence of bound KITLG/SCF. Homodimer in the presence of bound KITLG/SCF, forming a heterotetramer with two KITLG/SCF molecules. Interacts (via phosphorylated tyrosine residues) with the adapter proteins GRB2 and GRB7 (via SH2 domain), and SH2B2/APS. Interacts (via C-terminus) with MPDZ (via the tenth PDZ domain). Interacts (via phosphorylated tyrosine residues) with PIK3R1 and PIK3CD. Interacts (via phosphorylated tyrosine) with CRK (isoform Crk-II), FYN, SHC1 and MATK/CHK (via SH2 domain). Interacts with LYN and FES/FPS. Interacts (via phosphorylated tyrosine residues) with the protein phosphatases PTPN6/SHP-1 (via SH2 domain), PTPN11/SHP-2 (via SH2 domain) and PTPRU. Interacts with PLCG1. Interacts with DOK1 and TEC. Interacts with IL1RAP (independent of stimulation with KITLG/SCF). A mast cell-specific KITLG/SCF-induced interleukin-33 signaling complex contains IL1RL1, IL1RAP, KIT and MYD88. In terms of processing, ubiquitinated by SOCS6. KIT is rapidly ubiquitinated after autophosphorylation induced by KITLG/SCF binding, leading to internalization and degradation. Post-translationally, autophosphorylated on tyrosine residues. KITLG/SCF binding promotes autophosphorylation. Phosphorylated tyrosine residues are important for interaction with specific binding partners.

The protein localises to the cell membrane. It catalyses the reaction L-tyrosyl-[protein] + ATP = O-phospho-L-tyrosyl-[protein] + ADP + H(+). Present in an inactive conformation in the absence of bound ligand. KITLG/SCF binding leads to dimerization and activation by autophosphorylation on tyrosine residues. Activity is down-regulated by PRKCA-mediated phosphorylation on serine residues. Functionally, tyrosine-protein kinase that acts as a cell-surface receptor for the cytokine KITLG/SCF and plays an essential role in the regulation of cell survival and proliferation, hematopoiesis, stem cell maintenance, gametogenesis, mast cell development, migration and function, and in melanogenesis. In response to KITLG/SCF binding, KIT can activate several signaling pathways. Phosphorylates PIK3R1, PLCG1, SH2B2/APS and CBL. Activates the AKT1 signaling pathway by phosphorylation of PIK3R1, the regulatory subunit of phosphatidylinositol 3-kinase. Activated KIT also transmits signals via GRB2 and activation of RAS, RAF1 and the MAP kinases MAPK1/ERK2 and/or MAPK3/ERK1. Promotes activation of STAT family members STAT1, STAT3, STAT5A and STAT5B. Activation of PLCG1 leads to the production of the cellular signaling molecules diacylglycerol and inositol 1,4,5-trisphosphate. KIT signaling is modulated by protein phosphatases, and by rapid internalization and degradation of the receptor. Activated KIT promotes phosphorylation of the protein phosphatases PTPN6/SHP-1 and PTPRU, and of the transcription factors STAT1, STAT3, STAT5A and STAT5B. Promotes phosphorylation of PIK3R1, CBL, CRK (isoform Crk-II), LYN, MAPK1/ERK2 and/or MAPK3/ERK1, PLCG1, SRC and SHC1. This Capra hircus (Goat) protein is Mast/stem cell growth factor receptor Kit (KIT).